We begin with the raw amino-acid sequence, 177 residues long: Probasin (177 aa).

An N-terminal signal peptide occupies residues 1-17; that stretch reads MRVILLLLTLDVLGVSS. An intrachain disulfide couples C79 to C170.

This sequence belongs to the calycin superfamily. Lipocalin family. In terms of tissue distribution, prostatic epithelial cells.

Its subcellular location is the nucleus. It localises to the secreted. This is Probasin (Pbsn) from Rattus norvegicus (Rat).